The following is a 69-amino-acid chain: DNA gyrase inhibitor YacG (69 aa).

C7, C10, C26, and C30 together coordinate Zn(2+).

Belongs to the DNA gyrase inhibitor YacG family. Interacts with GyrB. It depends on Zn(2+) as a cofactor.

In terms of biological role, inhibits all the catalytic activities of DNA gyrase by preventing its interaction with DNA. Acts by binding directly to the C-terminal domain of GyrB, which probably disrupts DNA binding by the gyrase. This Shewanella putrefaciens (strain CN-32 / ATCC BAA-453) protein is DNA gyrase inhibitor YacG.